An 841-amino-acid polypeptide reads, in one-letter code: Auxin response factor 24 (841 aa).

The segment at 109 to 140 (LPEKQQDGNGSGNGNVSKDKVEEEEVVPPAAT) is disordered. A DNA-binding region (TF-B3) is located at residues 148–250 (FCKTLTASDT…ELRVGVRRAM (103 aa)). Disordered regions lie at residues 366–397 (PRPDRVSPWQIEPANSPSPVNPLPAPRTKRAR), 663–715 (QDAL…SRSC), and 804–841 (GALNSRSEDSRSTSVERGLVGEGLQGGLSTPSLNSENC). A compositionally biased stretch (basic and acidic residues) spans 684–695 (AQHDSAREKHQS). Polar residues-rich tracts occupy residues 701–713 (KNIQSKQQNGSSR) and 830–841 (GLSTPSLNSENC). The region spanning 713-797 (RSCKKVHKQG…HKIFIYTREE (85 aa)) is the PB1 domain.

This sequence belongs to the ARF family. As to quaternary structure, homodimers and heterodimers. Expressed in roots, culms, leaves and young panicles.

The protein localises to the nucleus. Its function is as follows. Auxin response factors (ARFs) are transcriptional factors that bind specifically to the DNA sequence 5'-TGTCTC-3' found in the auxin-responsive promoter elements (AuxREs). In Oryza sativa subsp. japonica (Rice), this protein is Auxin response factor 24 (ARF24).